The sequence spans 121 residues: Large ribosomal subunit protein uL14 (121 aa).

The protein belongs to the universal ribosomal protein uL14 family. In terms of assembly, part of the 50S ribosomal subunit. Forms a cluster with proteins L3 and L19. In the 70S ribosome, L14 and L19 interact and together make contacts with the 16S rRNA in bridges B5 and B8.

Binds to 23S rRNA. Forms part of two intersubunit bridges in the 70S ribosome. This is Large ribosomal subunit protein uL14 from Pseudoalteromonas atlantica (strain T6c / ATCC BAA-1087).